Here is a 446-residue protein sequence, read N- to C-terminus: Butyryl-CoA:acetate CoA-transferase (446 aa).

220-224 (GIGGM) contacts CoA. Glu-245 acts as the 5-glutamyl coenzyme A thioester intermediate in catalysis. Residues Val-320, Gly-343, and Lys-370 each coordinate CoA.

It belongs to the acetyl-CoA hydrolase/transferase family. Butyryl-CoA CoA-transferase subfamily.

The catalysed reaction is butanoate + acetyl-CoA = butanoyl-CoA + acetate. The enzyme catalyses propanoate + acetyl-CoA = propanoyl-CoA + acetate. It functions in the pathway lipid metabolism; butanoate metabolism. Functionally, coenzyme A-transferase that converts butyryl-CoA to butyrate. Can also use proprionyl-CoA as substrate in vitro. This Anaerostipes caccae (strain DSM 14662 / CCUG 47493 / JCM 13470 / NCIMB 13811 / L1-92) protein is Butyryl-CoA:acetate CoA-transferase.